Reading from the N-terminus, the 466-residue chain is 3-isopropylmalate dehydratase large subunit 1 (466 aa).

Cys347, Cys407, and Cys410 together coordinate [4Fe-4S] cluster.

It belongs to the aconitase/IPM isomerase family. LeuC type 1 subfamily. As to quaternary structure, heterodimer of LeuC and LeuD. The cofactor is [4Fe-4S] cluster.

The enzyme catalyses (2R,3S)-3-isopropylmalate = (2S)-2-isopropylmalate. The protein operates within amino-acid biosynthesis; L-leucine biosynthesis; L-leucine from 3-methyl-2-oxobutanoate: step 2/4. In terms of biological role, catalyzes the isomerization between 2-isopropylmalate and 3-isopropylmalate, via the formation of 2-isopropylmaleate. The protein is 3-isopropylmalate dehydratase large subunit 1 of Salmonella choleraesuis (strain SC-B67).